A 261-amino-acid chain; its full sequence is MAGPELLLDSNIRLWVVLPIVIITFFVGMIRHYVSILLQSDKKLTQEQVSDSQVLIRSRVLRENGKYIPKQSFLTRKYYFNNPEDGFFKKTKRKVVPPSPMTDPTMLTDMMKGNVTNVLPMILIGGWINMTFSGFVTTKVPFPLTLRFKPMLQQGIELLTLDASWVSSASWYFLNVFGLRSIYSLILGQDNAADQSRMMQEQMTGAAMAMPADTNKAFKTEWEALELTDHQWALDDVEEELMAKDLHFEGMFKKELQTSIF.

The Lumenal portion of the chain corresponds to 2-14 (AGPELLLDSNIRL). Residues 15–38 (WVVLPIVIITFFVGMIRHYVSILL) traverse the membrane as a helical segment. Residues 39 to 114 (QSDKKLTQEQ…TMLTDMMKGN (76 aa)) lie on the Cytoplasmic side of the membrane. Residues 115–130 (VTNVLPMILIGGWINM) form a helical membrane-spanning segment. Residues 131–168 (TFSGFVTTKVPFPLTLRFKPMLQQGIELLTLDASWVSS) are Lumenal-facing. The helical transmembrane segment at 169–187 (ASWYFLNVFGLRSIYSLIL) threads the bilayer. Residues 188 to 261 (GQDNAADQSR…FKKELQTSIF (74 aa)) are Cytoplasmic-facing.

It belongs to the EMC3 family. In terms of assembly, component of the ER membrane protein complex (EMC).

It localises to the endoplasmic reticulum membrane. Its function is as follows. Part of the endoplasmic reticulum membrane protein complex (EMC) that enables the energy-independent insertion into endoplasmic reticulum membranes of newly synthesized membrane proteins. Preferentially accommodates proteins with transmembrane domains that are weakly hydrophobic or contain destabilizing features such as charged and aromatic residues. Involved in the cotranslational insertion of multi-pass membrane proteins in which stop-transfer membrane-anchor sequences become ER membrane spanning helices. It is also required for the post-translational insertion of tail-anchored/TA proteins in endoplasmic reticulum membranes. By mediating the proper cotranslational insertion of N-terminal transmembrane domains in an N-exo topology, with translocated N-terminus in the lumen of the ER, controls the topology of multi-pass membrane proteins like the G protein-coupled receptors. By regulating the insertion of various proteins in membranes, it is indirectly involved in many cellular processes. This chain is ER membrane protein complex subunit 3 (EMC3), found in Homo sapiens (Human).